The sequence spans 387 residues: Succinate--CoA ligase [ADP-forming] subunit beta (387 aa).

Residues Lys-46, 53-55 (GRG), Glu-99, Ala-102, and Glu-107 contribute to the ATP site. Residues Asn-199 and Asp-213 each coordinate Mg(2+). Substrate contacts are provided by residues Asn-264 and 321–323 (GIV).

This sequence belongs to the succinate/malate CoA ligase beta subunit family. As to quaternary structure, heterotetramer of two alpha and two beta subunits. It depends on Mg(2+) as a cofactor.

The catalysed reaction is succinate + ATP + CoA = succinyl-CoA + ADP + phosphate. The enzyme catalyses GTP + succinate + CoA = succinyl-CoA + GDP + phosphate. Its pathway is carbohydrate metabolism; tricarboxylic acid cycle; succinate from succinyl-CoA (ligase route): step 1/1. Functionally, succinyl-CoA synthetase functions in the citric acid cycle (TCA), coupling the hydrolysis of succinyl-CoA to the synthesis of either ATP or GTP and thus represents the only step of substrate-level phosphorylation in the TCA. The beta subunit provides nucleotide specificity of the enzyme and binds the substrate succinate, while the binding sites for coenzyme A and phosphate are found in the alpha subunit. The protein is Succinate--CoA ligase [ADP-forming] subunit beta of Campylobacter jejuni subsp. doylei (strain ATCC BAA-1458 / RM4099 / 269.97).